A 247-amino-acid polypeptide reads, in one-letter code: Anionic trypsin (247 aa).

An N-terminal signal peptide occupies residues 1 to 15 (MHPLLILAFVGAAVA). A propeptide spans 16–23 (FPSDDDDK) (activation peptide). In terms of domain architecture, Peptidase S1 spans 24 to 244 (IVGGYTCAEN…YVDWIQETIA (221 aa)). Cystine bridges form between cysteine 30-cysteine 160, cysteine 48-cysteine 64, cysteine 132-cysteine 233, cysteine 139-cysteine 206, cysteine 171-cysteine 185, and cysteine 196-cysteine 220. Catalysis depends on histidine 63, which acts as the Charge relay system. Residues glutamate 75, asparagine 77, valine 80, and glutamate 85 each contribute to the Ca(2+) site. Aspartate 107 functions as the Charge relay system in the catalytic mechanism. The Charge relay system role is filled by serine 200.

It belongs to the peptidase S1 family. Requires Ca(2+) as cofactor. Not sulfated on tyrosine residue(s).

The protein localises to the secreted. It localises to the extracellular space. The catalysed reaction is Preferential cleavage: Arg-|-Xaa, Lys-|-Xaa.. The protein is Anionic trypsin of Bos taurus (Bovine).